Reading from the N-terminus, the 354-residue chain is Protein Wnt-8a (354 aa).

A signal peptide spans M1–G19. C54 and C65 are oxidised to a cystine. An N-linked (GlcNAc...) asparagine glycan is attached at N103. Intrachain disulfides connect C104–C112, C114–C132, C180–C194, C182–C189, C259–C297, C275–C290, C294–C336, C312–C327, C314–C324, and C319–C320. A lipid anchor (O-palmitoleoyl serine) is attached at S186. An N-linked (GlcNAc...) asparagine glycan is attached at N262.

This sequence belongs to the Wnt family. Forms a soluble 1:1 complex with AFM; this prevents oligomerization and is required for prolonged biological activity. The complex with AFM may represent the physiological form in body fluids. Post-translationally, palmitoleoylation is required for efficient binding to frizzled receptors. Depalmitoleoylation leads to Wnt signaling pathway inhibition. Proteolytic processing by TIKI1 and TIKI2 promotes oxidation and formation of large disulfide-bond oligomers, leading to inactivation of WNT8A.

The protein resides in the secreted. It localises to the extracellular space. The protein localises to the extracellular matrix. Functionally, ligand for members of the frizzled family of seven transmembrane receptors. Plays a role in embryonic patterning. The chain is Protein Wnt-8a (Wnt8a) from Mus musculus (Mouse).